We begin with the raw amino-acid sequence, 493 residues long: Glutamyl-tRNA(Gln) amidotransferase subunit A (493 aa).

Active-site charge relay system residues include K79 and S159. The Acyl-ester intermediate role is filled by S183.

Belongs to the amidase family. GatA subfamily. As to quaternary structure, heterotrimer of A, B and C subunits.

The enzyme catalyses L-glutamyl-tRNA(Gln) + L-glutamine + ATP + H2O = L-glutaminyl-tRNA(Gln) + L-glutamate + ADP + phosphate + H(+). In terms of biological role, allows the formation of correctly charged Gln-tRNA(Gln) through the transamidation of misacylated Glu-tRNA(Gln) in organisms which lack glutaminyl-tRNA synthetase. The reaction takes place in the presence of glutamine and ATP through an activated gamma-phospho-Glu-tRNA(Gln). The sequence is that of Glutamyl-tRNA(Gln) amidotransferase subunit A from Brucella anthropi (strain ATCC 49188 / DSM 6882 / CCUG 24695 / JCM 21032 / LMG 3331 / NBRC 15819 / NCTC 12168 / Alc 37) (Ochrobactrum anthropi).